The primary structure comprises 693 residues: Protein-glutamine gamma-glutamyltransferase E (693 aa).

Phosphotyrosine is present on Tyr111. Thr112 is subject to Phosphothreonine. Ca(2+) is bound by residues Ala222, Asn225, Asn227, and Asp228. The active site involves Cys273. The Ca(2+) site is built by Asp302, Asp304, Asn306, Ser308, and Asp325. Residues His331 and Asp354 contribute to the active site. Asn394, Thr416, Glu444, and Glu449 together coordinate Ca(2+). The tract at residues Lys455–Ser482 is disordered.

Belongs to the transglutaminase superfamily. Transglutaminase family. Consists of two polypeptide chains, which are synthesized as a precursor form of a single polypeptide. Ca(2+) serves as cofactor. In terms of processing, activated by proteolytic processing. In vitro activation is commonly achieved by cleavage with dispase, a neutral bacterial protease. Physiological activation may be catalyzed by CTSL and, to a lesser extent, by CTSS.

Its subcellular location is the cytoplasm. It carries out the reaction L-glutaminyl-[protein] + L-lysyl-[protein] = [protein]-L-lysyl-N(6)-5-L-glutamyl-[protein] + NH4(+). Functionally, catalyzes the calcium-dependent formation of isopeptide cross-links between glutamine and lysine residues in various proteins, as well as the conjugation of polyamines to proteins. Involved in the formation of the cornified envelope (CE), a specialized component consisting of covalent cross-links of proteins beneath the plasma membrane of terminally differentiated keratinocytes. Catalyzes small proline-rich proteins and LOR cross-linking to form small interchain oligomers, which are further cross-linked by TGM1 onto the growing CE scaffold. In hair follicles, involved in cross-linking structural proteins to hardening the inner root sheath. The protein is Protein-glutamine gamma-glutamyltransferase E (Tgm3) of Rattus norvegicus (Rat).